The following is a 470-amino-acid chain: Dendritic cell-specific transmembrane protein (470 aa).

Residues M1–L33 are Cytoplasmic-facing. The helical transmembrane segment at G34–I54 threads the bilayer. L55 is a topological domain (extracellular). Residues P56–K76 form a helical membrane-spanning segment. Residues R77–A97 are Cytoplasmic-facing. Residues L98–F118 traverse the membrane as a helical segment. At R119–S209 the chain is on the extracellular side. Residues V210 to F230 traverse the membrane as a helical segment. Over L231–T292 the chain is Cytoplasmic. The chain crosses the membrane as a helical span at residues L293–V313. The Extracellular segment spans residues D314–T376. A helical transmembrane segment spans residues W377–L397. Residues M398–L470 are Cytoplasmic-facing.

As to quaternary structure, interacts with CREB3. Monomer. Homodimer. Isoform 1 interacts (via the C-terminus cytoplasmic tail) with OS9 isoform 1 (via the C-terminus tail); the interaction induces DCSTAMP redistribution to the endoplasmic reticulum-Golgi intermediate compartment. Isoform 1 interacts (via the C-terminus cytoplasmic tail) with OS9 isoform 2 (via the C-terminus tail). In terms of processing, glycosylated. As to expression, expressed in macrophages and bone marrow dendritic cells (BM-DC). Weakly expressed in the spleen and lymph node. Highly expressed in multi-nuclear osteoclasts compared to mono-nuclear macrophages. Expressed in foreign body giant cells (FBGCs). Isoform 1 and isoform 2 are expressed in osteoclasts.

It localises to the cell membrane. The protein resides in the endoplasmic reticulum membrane. The protein localises to the endoplasmic reticulum-Golgi intermediate compartment membrane. Its subcellular location is the endosome. Functionally, probable cell surface receptor that plays several roles in cellular fusion, cell differentiation, bone and immune homeostasis. Plays a role in TNFSF11-mediated osteoclastogenesis. Cooperates with OCSTAMP in modulating cell-cell fusion in both osteoclasts and foreign body giant cells (FBGCs). Participates in osteoclast bone resorption. Involved in inducing the expression of tartrate-resistant acid phosphatase in osteoclast precursors. Plays a role in haematopoietic stem cell differentiation of bone marrow cells toward the myeloid lineage. Inhibits the development of neutrophilic granulocytes. Plays also a role in the regulation of dendritic cell (DC) antigen presentation activity by controlling phagocytic activity. Involved in the maintenance of immune self-tolerance and avoidance of autoimmune reactions. The protein is Dendritic cell-specific transmembrane protein (Dcstamp) of Mus musculus (Mouse).